The following is a 689-amino-acid chain: DNA-directed RNA polymerase subunit beta' (689 aa).

Cys76, Cys78, Cys94, and Cys97 together coordinate Zn(2+). Positions 496, 498, and 500 each coordinate Mg(2+).

Belongs to the RNA polymerase beta' chain family. RpoC1 subfamily. In plastids the minimal PEP RNA polymerase catalytic core is composed of four subunits: alpha, beta, beta', and beta''. When a (nuclear-encoded) sigma factor is associated with the core the holoenzyme is formed, which can initiate transcription. Mg(2+) serves as cofactor. It depends on Zn(2+) as a cofactor.

Its subcellular location is the plastid. It is found in the chloroplast. It catalyses the reaction RNA(n) + a ribonucleoside 5'-triphosphate = RNA(n+1) + diphosphate. DNA-dependent RNA polymerase catalyzes the transcription of DNA into RNA using the four ribonucleoside triphosphates as substrates. The chain is DNA-directed RNA polymerase subunit beta' from Illicium oligandrum (Star anise).